The chain runs to 75 residues: Brevinin-2SN1 (75 aa).

The N-terminal stretch at 1–22 (MFTMKKPLLFLFFLGTISLSFC) is a signal peptide. A propeptide spans 23-40 (EEERGADEDDEVEMTEEE) (removed in mature form). A disulfide bridge connects residues Cys69 and Cys75.

It belongs to the frog skin active peptide (FSAP) family. Brevinin subfamily. Expressed by the skin glands.

The protein resides in the secreted. Functionally, antimicrobial peptide. Active against some Gram-negative and a variety of Gram-positive bacterial strains. Active against fungus C.glabrata 090902 but not against C.albicans ATCC 10231. Shows hemolytic activity against human erythrocytes. The chain is Brevinin-2SN1 from Sylvirana spinulosa (Fine-spined frog).